The sequence spans 272 residues: Neurogenin-2 (272 aa).

The tract at residues 30–69 (LTPLSSSADEEEEEEPGASGGARRQRGAEAGQGARGGVAA) is disordered. A bHLH domain is found at 112-164 (TRRLKANNRERNRMHNLNAALDALREVLPTFPEDAKLTKIETLRFAHNYIWAL). A compositionally biased stretch (low complexity) spans 197–239 (ASAALSSSGDSPSPASTWSCTNSPAPSSSVSSNSTSPYSCTLS). Residues 197 to 264 (ASAALSSSGD…PPDKHRYAPH (68 aa)) are disordered.

In terms of assembly, efficient DNA binding requires dimerization with another bHLH protein.

Its subcellular location is the nucleus. In terms of biological role, transcriptional regulator. Involved in neuronal differentiation. Activates transcription by binding to the E box (5'-CANNTG-3'). This Homo sapiens (Human) protein is Neurogenin-2 (NEUROG2).